Reading from the N-terminus, the 464-residue chain is Dihydrolipoyl dehydrogenase (464 aa).

FAD contacts are provided by residues 33-41, Lys50, and Gly113; that span reads EPKYWGGVC. A disulfide bond links Cys41 and Cys46. Residues 178–182, Glu201, and 266–269 contribute to the NAD(+) site; these read GAGAI and AIGF. 2 residues coordinate FAD: Asp309 and Ala317. The Proton acceptor role is filled by His443.

The protein belongs to the class-I pyridine nucleotide-disulfide oxidoreductase family. Homodimer. Part of the PDH complex, consisting of multiple copies of AceE (E1), DlaT (E2) and Lpd (E3), and of the BCKADH complex, consisting of multiple copies of BkdA/BkdB (E1), BkdC (E2) and Lpd (E3). FAD is required as a cofactor.

The protein resides in the cytoplasm. It catalyses the reaction N(6)-[(R)-dihydrolipoyl]-L-lysyl-[protein] + NAD(+) = N(6)-[(R)-lipoyl]-L-lysyl-[protein] + NADH + H(+). Its function is as follows. Lipoamide dehydrogenase is a component of the alpha-ketoacid dehydrogenase complexes. Catalyzes the reoxidation of dihydrolipoyl groups which are covalently attached to the lipoate acyltransferase components (E2) of the complexes. This is Dihydrolipoyl dehydrogenase (lpd) from Mycobacterium bovis (strain ATCC BAA-935 / AF2122/97).